A 178-amino-acid polypeptide reads, in one-letter code: MSRIGRQPISVPKGVEVTIDGKDVKVKGPKGELKHTVPPSITVTLEDGQVKVSRADDRPQTRSLHGLTRSLIANLIEGTSKGYTKTLEISGVGYRVQAKGRNLEFSLGYSHPIVVEPPEGITFRVEKPTLLHVEGIDKQKVGQVAADIRSLRKPDPYKAKGIRYQGERIRRKAGKAGK.

Belongs to the universal ribosomal protein uL6 family. In terms of assembly, part of the 50S ribosomal subunit.

Functionally, this protein binds to the 23S rRNA, and is important in its secondary structure. It is located near the subunit interface in the base of the L7/L12 stalk, and near the tRNA binding site of the peptidyltransferase center. The chain is Large ribosomal subunit protein uL6 from Thermobifida fusca (strain YX).